We begin with the raw amino-acid sequence, 91 residues long: Essential MCU regulator, mitochondrial (91 aa).

Residues 45 to 65 (VIPFGLLGVVLTVIPGLLIGA) traverse the membrane as a helical segment.

It belongs to the SMDT1/EMRE family.

It is found in the mitochondrion inner membrane. Functionally, essential regulatory subunit of the mitochondrial calcium uniporter (mcu) channel, a protein that mediates calcium uptake into mitochondria. The chain is Essential MCU regulator, mitochondrial from Aedes aegypti (Yellowfever mosquito).